The chain runs to 334 residues: Fructose-1,6-bisphosphatase class 1 (334 aa).

Mg(2+) is bound by residues E90, D113, L115, and D116. Substrate is bound by residues 116-119 (DGSS), N209, Y242, and K272. E278 provides a ligand contact to Mg(2+).

The protein belongs to the FBPase class 1 family. Homotetramer. It depends on Mg(2+) as a cofactor.

It localises to the cytoplasm. It catalyses the reaction beta-D-fructose 1,6-bisphosphate + H2O = beta-D-fructose 6-phosphate + phosphate. Its pathway is carbohydrate biosynthesis; gluconeogenesis. This chain is Fructose-1,6-bisphosphatase class 1, found in Actinobacillus succinogenes (strain ATCC 55618 / DSM 22257 / CCUG 43843 / 130Z).